Consider the following 418-residue polypeptide: Hepatic and glial cell adhesion molecule (418 aa).

Residues 1 to 33 (MKRERGALSRASRALRLSPFVYLLLIQPVPLEG) form the signal peptide. The region spanning 34 to 142 (VNITSPVRLI…GEKTINLTVD (109 aa)) is the Ig-like V-type domain. Residues 34 to 240 (VNITSPVRLI…VKITVYRRSS (207 aa)) are Extracellular-facing. N35, N138, N167, and N189 each carry an N-linked (GlcNAc...) asparagine glycan. An Ig-like C2-type domain is found at 148–234 (PQVLVASTTV…QVRSLPVKIT (87 aa)). A disulfide bridge links C168 with C217. A helical transmembrane segment spans residues 241 to 261 (LYIILSTGGIFLLVTLVTVCA). Residues 262–418 (CWKPSKKSRK…DESGQVEISA (157 aa)) lie on the Cytoplasmic side of the membrane. Residues 271 to 418 (KKRKLEKQNS…DESGQVEISA (148 aa)) form a disordered region. S280 bears the Phosphoserine mark. The span at 287–308 (NDDRLKSEADTLPRSGEQERKN) shows a compositional bias: basic and acidic residues. Residues S321, S352, and S379 each carry the phosphoserine modification. Over residues 341 to 358 (GYSVSPPVPGRSPGLPIR) the composition is skewed to low complexity. The segment covering 385–396 (SSPGRSRSSSRS) has biased composition (low complexity).

Homodimer. Dimer formation occurs predominantly through cis interactions on the cell surface. Part of a complex containing MLC1, TRPV4, AQP4 and ATP1B1. Interacts with CLCN2. In terms of processing, N-glycosylated.

The protein localises to the cytoplasm. The protein resides in the cell membrane. In terms of biological role, involved in regulating cell motility and cell-matrix interactions. May inhibit cell growth through suppression of cell proliferation. In glia, associates and targets CLCN2 at astrocytic processes and myelinated fiber tracts where it may regulate transcellular chloride flux involved in neuron excitability. In Mus musculus (Mouse), this protein is Hepatic and glial cell adhesion molecule.